The primary structure comprises 250 residues: Heme oxygenase 2 (250 aa).

Histidine 16 is a heme b binding site. The interval 228–250 is disordered; that stretch reads QDRPGSTEARSTAGHPITLMVGE.

This sequence belongs to the heme oxygenase family. Homodimer.

It carries out the reaction heme b + 3 reduced [NADPH--hemoprotein reductase] + 3 O2 = biliverdin IXalpha + CO + Fe(2+) + 3 oxidized [NADPH--hemoprotein reductase] + 3 H2O + H(+). Its function is as follows. Catalyzes the opening of the heme ring with the release of iron. Key enzyme in the synthesis of the chromophoric part of the photosynthetic antennae. This is Heme oxygenase 2 (pbsA2) from Synechocystis sp. (strain ATCC 27184 / PCC 6803 / Kazusa).